The chain runs to 239 residues: 1-(5-phosphoribosyl)-5-[(5-phosphoribosylamino)methylideneamino] imidazole-4-carboxamide isomerase (239 aa).

Catalysis depends on D12, which acts as the Proton acceptor. The active-site Proton donor is D133.

Belongs to the HisA/HisF family.

The protein localises to the cytoplasm. The enzyme catalyses 1-(5-phospho-beta-D-ribosyl)-5-[(5-phospho-beta-D-ribosylamino)methylideneamino]imidazole-4-carboxamide = 5-[(5-phospho-1-deoxy-D-ribulos-1-ylimino)methylamino]-1-(5-phospho-beta-D-ribosyl)imidazole-4-carboxamide. The protein operates within amino-acid biosynthesis; L-histidine biosynthesis; L-histidine from 5-phospho-alpha-D-ribose 1-diphosphate: step 4/9. The sequence is that of 1-(5-phosphoribosyl)-5-[(5-phosphoribosylamino)methylideneamino] imidazole-4-carboxamide isomerase from Sulfurihydrogenibium sp. (strain YO3AOP1).